Here is a 224-residue protein sequence, read N- to C-terminus: 7-cyano-7-deazaguanine synthase (224 aa).

9-19 is a binding site for ATP; sequence LSGGLDSATAL. Positions 188, 198, 201, and 204 each coordinate Zn(2+).

The protein belongs to the QueC family. It depends on Zn(2+) as a cofactor.

The enzyme catalyses 7-carboxy-7-deazaguanine + NH4(+) + ATP = 7-cyano-7-deazaguanine + ADP + phosphate + H2O + H(+). It functions in the pathway purine metabolism; 7-cyano-7-deazaguanine biosynthesis. Catalyzes the ATP-dependent conversion of 7-carboxy-7-deazaguanine (CDG) to 7-cyano-7-deazaguanine (preQ(0)). This Thiobacillus denitrificans (strain ATCC 25259 / T1) protein is 7-cyano-7-deazaguanine synthase.